The chain runs to 249 residues: Glutathione S-transferase tcpG (249 aa).

In terms of domain architecture, GST N-terminal spans 20-109 (LYVRKAIPAP…YLCDKHDKDG (90 aa)). The region spanning 115-249 (NATERAQVTS…TEEEIELHGR (135 aa)) is the GST C-terminal domain.

This sequence belongs to the GST superfamily.

It carries out the reaction RX + glutathione = an S-substituted glutathione + a halide anion + H(+). The protein operates within secondary metabolite biosynthesis. In terms of biological role, glutathione S-transferase; part of the gene cluster that mediates the biosynthesis of an unusual class of epipolythiodioxopiperazines (ETPs) lacking the reactive thiol group important for toxicity. Firstly, L-tyrosine is prenylated by tcpD, before undergoing condensation with L-glycine in a reaction catalyzed by the NRPS tcpP leading to the diketopiperazine (DKP) backbone. Afterwards the alpha-carbon of tyrosine is oxidized by the cytochrome P450 tcpC to form a hydroxyl group. However, in contrast other ETP biosynthesis pathways studied so far, tcpC is not able to bishydroxylate the DKP at both alpha-carbon positions, but hydroxylates the alpha-carbon of the tyrosine part and the nitrogen of the glycine part. The next steps involve an alpha,beta-elimination reaction catalyzed by tcpI, a methylation by the methyltransferase tcpN the action of the four enzyme cascade tcpG/K/J/I. Due to a dysfunctional cytochrome P450 monooxygenase tcpC, the pathway leads to the biosynthesis of probable non-toxic metabolites lacking the reactive thiol group. This chain is Glutathione S-transferase tcpG, found in Claviceps purpurea (strain 20.1) (Ergot fungus).